The following is a 1025-amino-acid chain: Multidrug resistance protein MdtC (1025 aa).

12 helical membrane-spanning segments follow: residues 3–23 (FFAL…AITL), 333–353 (EVEQ…FLFL), 360–380 (IIPA…MYLC), 387–407 (LSLM…IVVL), 431–451 (VGFT…PLLL), 463–483 (FAVT…TLTP), 528–548 (LVGV…ISIP), 853–873 (VILI…LYES), 875–895 (VHPL…LLAL), 897–917 (LFNA…IGIV), 953–973 (PIMM…LSGG), and 984–1004 (ITIV…TPVV).

This sequence belongs to the resistance-nodulation-cell division (RND) (TC 2.A.6) family. MdtC subfamily. Part of a tripartite efflux system composed of MdtA, MdtB and MdtC. MdtC forms a heteromultimer with MdtB.

It localises to the cell inner membrane. Its function is as follows. The MdtABC tripartite complex confers resistance against novobiocin and deoxycholate. The sequence is that of Multidrug resistance protein MdtC from Escherichia coli (strain ATCC 8739 / DSM 1576 / NBRC 3972 / NCIMB 8545 / WDCM 00012 / Crooks).